A 339-amino-acid polypeptide reads, in one-letter code: Glycerol-3-phosphate dehydrogenase [NAD(P)+] (339 aa).

4 residues coordinate NADPH: serine 15, tyrosine 16, histidine 36, and lysine 110. Residues lysine 110, glycine 139, and threonine 141 each contribute to the sn-glycerol 3-phosphate site. NADPH is bound at residue alanine 143. Residues lysine 195, aspartate 248, serine 258, arginine 259, and asparagine 260 each contribute to the sn-glycerol 3-phosphate site. Catalysis depends on lysine 195, which acts as the Proton acceptor. NADPH is bound at residue arginine 259. Residues valine 283 and glutamate 285 each contribute to the NADPH site.

The protein belongs to the NAD-dependent glycerol-3-phosphate dehydrogenase family.

It is found in the cytoplasm. It catalyses the reaction sn-glycerol 3-phosphate + NAD(+) = dihydroxyacetone phosphate + NADH + H(+). The enzyme catalyses sn-glycerol 3-phosphate + NADP(+) = dihydroxyacetone phosphate + NADPH + H(+). The protein operates within membrane lipid metabolism; glycerophospholipid metabolism. Catalyzes the reduction of the glycolytic intermediate dihydroxyacetone phosphate (DHAP) to sn-glycerol 3-phosphate (G3P), the key precursor for phospholipid synthesis. The protein is Glycerol-3-phosphate dehydrogenase [NAD(P)+] of Shigella dysenteriae serotype 1 (strain Sd197).